The following is a 101-amino-acid chain: Urease subunit beta (101 aa).

Belongs to the urease beta subunit family. Heterotrimer of UreA (gamma), UreB (beta) and UreC (alpha) subunits. Three heterotrimers associate to form the active enzyme.

Its subcellular location is the cytoplasm. The catalysed reaction is urea + 2 H2O + H(+) = hydrogencarbonate + 2 NH4(+). Its pathway is nitrogen metabolism; urea degradation; CO(2) and NH(3) from urea (urease route): step 1/1. The sequence is that of Urease subunit beta from Granulibacter bethesdensis (strain ATCC BAA-1260 / CGDNIH1).